A 365-amino-acid polypeptide reads, in one-letter code: MKKWIVMASLLLAALPAMSAQRLKDIANIGGVRPNQLIGYGLVVGLDGSGDKVTSSPFTGQAMINMLNQLGVQVPPGTKIDPKNVAAVTLTATLPPFSKRGQMLDVTASSIGDAKSLRGGTLLLSPLKGADGQIYAMAQGNVVVGGAGASAGGSSTQINQLSVGRIPSGATVEREVQTALGDGEFIHLELQESDFTTANRAVQAINKVFGGDTARAVDGRLIEVRAPFDSNQRVQFLSRMENIAVDPADLSPLVIINARTGSIVMNQAVTLGSCAVSHGNLSVTVNNTPQVSQPNPLSGGKTVVTNQADITINSTSGKVVGLKGGANLSQVVNALNALGATPQDLISILQAMKSAGSLKADLQII.

An N-terminal signal peptide occupies residues 1-19; it reads MKKWIVMASLLLAALPAMS.

This sequence belongs to the FlgI family. In terms of assembly, the basal body constitutes a major portion of the flagellar organelle and consists of four rings (L,P,S, and M) mounted on a central rod.

Its subcellular location is the periplasm. The protein resides in the bacterial flagellum basal body. Assembles around the rod to form the L-ring and probably protects the motor/basal body from shearing forces during rotation. In Chromobacterium violaceum (strain ATCC 12472 / DSM 30191 / JCM 1249 / CCUG 213 / NBRC 12614 / NCIMB 9131 / NCTC 9757 / MK), this protein is Flagellar P-ring protein 2.